Consider the following 426-residue polypeptide: MVLSVPVIALGATLGTATSILALCGVTCLCRHMHPKKGLLPRDQDPDLEKAKPSLLGSAQQFNVKKSTEPVQPRALLKFPDIYGPRPAVTAPEVINYADYSLRSTEEPTAPASPQPPNDSRLKRQVTEELFILPQNGVVEDVCVMETWNPEKAASWNQAPKLHYCLDYDCQKAELFVTRLEAVTSNHDGGCDCYVQGSVANRTGSVEAQTALKKRQLHTTWEEGLVLPLAEEELPTATLTLTLRTCDRFSRHSVAGELRLGLDGTSVPLGAAQWGELKTSAKEPSAGAGEVLLSISYLPAANRLLVVLIKAKNLHSNQSKELLGKDVSVKVTLKHQARKLKKKQTKRAKHKINPVWNEMIMFELPDDLLQASSVELEVLGQDDSGQSCALGHCSLGLHTSGSERSHWEEMLKNPRRQIAMWHQLHL.

Over 1–6 the chain is Vesicular; it reads MVLSVP. The helical transmembrane segment at 7–29 threads the bilayer; sequence VIALGATLGTATSILALCGVTCL. Topologically, residues 30 to 426 are cytoplasmic; sequence CRHMHPKKGL…QIAMWHQLHL (397 aa). C2 domains are found at residues 158 to 275 and 287 to 422; these read QAPK…AQWG and GAGE…AMWH.

The protein belongs to the synaptotagmin family. Interacts with NRXN1. Expressed in brain, pancreas and kidney.

It is found in the membrane. Functionally, may be involved in transport vesicle docking to the plasma membrane. In Homo sapiens (Human), this protein is Synaptotagmin-13 (SYT13).